The sequence spans 129 residues: Ribosome-binding factor A (129 aa).

It belongs to the RbfA family. As to quaternary structure, monomer. Binds 30S ribosomal subunits, but not 50S ribosomal subunits or 70S ribosomes.

The protein resides in the cytoplasm. One of several proteins that assist in the late maturation steps of the functional core of the 30S ribosomal subunit. Associates with free 30S ribosomal subunits (but not with 30S subunits that are part of 70S ribosomes or polysomes). Required for efficient processing of 16S rRNA. May interact with the 5'-terminal helix region of 16S rRNA. The chain is Ribosome-binding factor A from Marinomonas sp. (strain MWYL1).